The following is a 306-amino-acid chain: Non-specific ribonucleoside hydrolase RihC (306 aa).

The active site involves histidine 235.

Belongs to the IUNH family. RihC subfamily.

Hydrolyzes both purine and pyrimidine ribonucleosides with a broad-substrate specificity. This chain is Non-specific ribonucleoside hydrolase RihC, found in Salmonella schwarzengrund (strain CVM19633).